Reading from the N-terminus, the 144-residue chain is Peptide methionine sulfoxide reductase MsrB (144 aa).

The MsrB domain maps to 5–128 (QEELRQRIGH…NSAALDFIPY (124 aa)). Residue Cys-117 is the Nucleophile of the active site.

Belongs to the MsrB Met sulfoxide reductase family.

It catalyses the reaction L-methionyl-[protein] + [thioredoxin]-disulfide + H2O = L-methionyl-(R)-S-oxide-[protein] + [thioredoxin]-dithiol. The polypeptide is Peptide methionine sulfoxide reductase MsrB (Streptococcus agalactiae serotype Ia (strain ATCC 27591 / A909 / CDC SS700)).